A 120-amino-acid chain; its full sequence is Small ribosomal subunit protein uS13 (120 aa).

A disordered region spans residues 93–120; that stretch reads RRGLPCRGQKTKTNARTRKGKRKTVGAA.

It belongs to the universal ribosomal protein uS13 family. Part of the 30S ribosomal subunit. Forms a loose heterodimer with protein S19. Forms two bridges to the 50S subunit in the 70S ribosome.

Located at the top of the head of the 30S subunit, it contacts several helices of the 16S rRNA. In the 70S ribosome it contacts the 23S rRNA (bridge B1a) and protein L5 of the 50S subunit (bridge B1b), connecting the 2 subunits; these bridges are implicated in subunit movement. Contacts the tRNAs in the A and P-sites. This is Small ribosomal subunit protein uS13 from Sulfurimonas denitrificans (strain ATCC 33889 / DSM 1251) (Thiomicrospira denitrificans (strain ATCC 33889 / DSM 1251)).